Reading from the N-terminus, the 249-residue chain is Pulmonary surfactant-associated protein A (249 aa).

The N-terminal stretch at 1–20 (MLRWPLALTFLLLAVSGLEC) is a signal peptide. In terms of domain architecture, Collagen-like spans 28-100 (ASPGIPGTPG…PGERGPPGLP (73 aa)). The segment at 29-102 (SPGIPGTPGS…ERGPPGLPAH (74 aa)) is disordered. 4-hydroxyproline is present on residues Pro-30, Pro-33, Pro-36, Pro-42, Pro-54, Pro-57, Pro-63, and Pro-70. The span at 42-51 (PGRDGRDGIK) shows a compositional bias: basic and acidic residues. The span at 84-93 (ERGEKGEPGE) shows a compositional bias: basic and acidic residues. Residues 133 to 249 (AVGEKVFSTN…QQYRLAICEF (117 aa)) enclose the C-type lectin domain. 2 disulfides stabilise this stretch: Cys-155-Cys-247 and Cys-225-Cys-239. N-linked (GlcNAc...) asparagine glycosylation is present at Asn-208. Ca(2+)-binding residues include Glu-216, Arg-218, Asn-235, and Asp-236.

The protein belongs to the SFTPA family. Oligomeric complex of 6 set of homotrimers.

It is found in the secreted. Its subcellular location is the extracellular space. The protein localises to the extracellular matrix. It localises to the surface film. In presence of calcium ions, it binds to surfactant phospholipids and contributes to lower the surface tension at the air-liquid interface in the alveoli of the mammalian lung and is essential for normal respiration. Enhances the expression of MYO18A/SP-R210 on alveolar macrophages. The sequence is that of Pulmonary surfactant-associated protein A (SFTPA1) from Sus scrofa (Pig).